The following is a 315-amino-acid chain: Protein ADP-ribosyltransferase (315 aa).

In terms of domain architecture, Deacetylase sirtuin-type spans 13–299 (LMDEKTKQAE…TTALRNDSTT (287 aa)). Residues Ala40, 123–126 (TNAD), and Gln143 each bind NAD(+). Positions 151, 155, 186, and 189 each coordinate Zn(2+). NAD(+) contacts are provided by residues 238-240 (YTT), Asn264, Tyr268, and Ile285.

Belongs to the sirtuin family. Class M subfamily. The cofactor is Zn(2+).

It catalyses the reaction L-aspartyl-[protein] + NAD(+) = 4-O-(ADP-D-ribosyl)-L-aspartyl-[protein] + nicotinamide. With respect to regulation, is inhibited by Tenovin-6 in vitro, but not by nicotinamide. In terms of biological role, catalyzes specifically the mono-ADP-ribosylation of GcvH-L (SAV0324). This activity is dependent on prior lipoylation of the target protein. May be involved in the modulation of the response to host-derived oxidative stress. In contrast to other sirtuin classes, lacks protein deacylase activity, being unable to catalyze delipoylation, debiotinylation, deacetylation and desuccinylation of proteins. The protein is Protein ADP-ribosyltransferase of Staphylococcus aureus (strain Mu50 / ATCC 700699).